The chain runs to 210 residues: Thiamine-phosphate synthase (210 aa).

Residues 38–42 (QFREK) and Asn-70 contribute to the 4-amino-2-methyl-5-(diphosphooxymethyl)pyrimidine site. Residues Asp-71 and Asp-90 each coordinate Mg(2+). Ser-107 serves as a coordination point for 4-amino-2-methyl-5-(diphosphooxymethyl)pyrimidine. 132–134 (TKT) provides a ligand contact to 2-[(2R,5Z)-2-carboxy-4-methylthiazol-5(2H)-ylidene]ethyl phosphate. Lys-135 contacts 4-amino-2-methyl-5-(diphosphooxymethyl)pyrimidine. 183 to 184 (IS) contributes to the 2-[(2R,5Z)-2-carboxy-4-methylthiazol-5(2H)-ylidene]ethyl phosphate binding site.

The protein belongs to the thiamine-phosphate synthase family. The cofactor is Mg(2+).

The catalysed reaction is 2-[(2R,5Z)-2-carboxy-4-methylthiazol-5(2H)-ylidene]ethyl phosphate + 4-amino-2-methyl-5-(diphosphooxymethyl)pyrimidine + 2 H(+) = thiamine phosphate + CO2 + diphosphate. It catalyses the reaction 2-(2-carboxy-4-methylthiazol-5-yl)ethyl phosphate + 4-amino-2-methyl-5-(diphosphooxymethyl)pyrimidine + 2 H(+) = thiamine phosphate + CO2 + diphosphate. It carries out the reaction 4-methyl-5-(2-phosphooxyethyl)-thiazole + 4-amino-2-methyl-5-(diphosphooxymethyl)pyrimidine + H(+) = thiamine phosphate + diphosphate. The protein operates within cofactor biosynthesis; thiamine diphosphate biosynthesis; thiamine phosphate from 4-amino-2-methyl-5-diphosphomethylpyrimidine and 4-methyl-5-(2-phosphoethyl)-thiazole: step 1/1. Its function is as follows. Condenses 4-methyl-5-(beta-hydroxyethyl)thiazole monophosphate (THZ-P) and 2-methyl-4-amino-5-hydroxymethyl pyrimidine pyrophosphate (HMP-PP) to form thiamine monophosphate (TMP). The chain is Thiamine-phosphate synthase from Archaeoglobus fulgidus (strain ATCC 49558 / DSM 4304 / JCM 9628 / NBRC 100126 / VC-16).